The following is a 246-amino-acid chain: Biosynthetic peptidoglycan transglycosylase (246 aa).

A helical membrane pass occupies residues 27–47; that stretch reads VVFCFFFAVFALLLIFRFVPI.

Belongs to the glycosyltransferase 51 family.

It is found in the cell inner membrane. It catalyses the reaction [GlcNAc-(1-&gt;4)-Mur2Ac(oyl-L-Ala-gamma-D-Glu-L-Lys-D-Ala-D-Ala)](n)-di-trans,octa-cis-undecaprenyl diphosphate + beta-D-GlcNAc-(1-&gt;4)-Mur2Ac(oyl-L-Ala-gamma-D-Glu-L-Lys-D-Ala-D-Ala)-di-trans,octa-cis-undecaprenyl diphosphate = [GlcNAc-(1-&gt;4)-Mur2Ac(oyl-L-Ala-gamma-D-Glu-L-Lys-D-Ala-D-Ala)](n+1)-di-trans,octa-cis-undecaprenyl diphosphate + di-trans,octa-cis-undecaprenyl diphosphate + H(+). The protein operates within cell wall biogenesis; peptidoglycan biosynthesis. Peptidoglycan polymerase that catalyzes glycan chain elongation from lipid-linked precursors. This Haemophilus influenzae (strain ATCC 51907 / DSM 11121 / KW20 / Rd) protein is Biosynthetic peptidoglycan transglycosylase.